The primary structure comprises 523 residues: Tyrosine-protein kinase transforming protein Src (523 aa).

A disordered region spans residues 1 to 50 (MGSSKSKPKDPSQRRRSLEPPDSTHHGGFPASQTPNKTAAPDTHRTPSRS). Glycine 2 carries the N-myristoyl glycine; by host lipid modification. Residues 7 to 25 (KPKDPSQRRRSLEPPDSTH) are compositionally biased toward basic and acidic residues. One can recognise an SH3 domain in the interval 71-139 (TSPQRAGALA…PSNYVAPSDS (69 aa)). One can recognise an SH2 domain in the interval 145 to 242 (WYFGKITRRE…GLCHRLTNVC (98 aa)). Residues 264 to 514 (LRLEVKLGQG…TFEYLQAQLL (251 aa)) form the Protein kinase domain. ATP is bound by residues 270 to 278 (LGQGYFGEV) and lysine 292. Aspartate 383 serves as the catalytic Proton acceptor. The residue at position 413 (tyrosine 413) is a Phosphotyrosine; by autocatalysis.

This sequence belongs to the protein kinase superfamily. Tyr protein kinase family. SRC subfamily. As to quaternary structure, homodimer. The phosphorylated form is termed pp60v-src.

The catalysed reaction is L-tyrosyl-[protein] + ATP = O-phospho-L-tyrosyl-[protein] + ADP + H(+). Its function is as follows. This phosphoprotein, required for both the initiation and the maintenance of neoplastic transformation, is a protein kinase that catalyzes the phosphorylation of tyrosine residues in vitro. In Gallus gallus (Chicken), this protein is Tyrosine-protein kinase transforming protein Src (V-SRC).